A 130-amino-acid chain; its full sequence is Transcription antitermination protein NusB (130 aa).

Belongs to the NusB family.

In terms of biological role, involved in transcription antitermination. Required for transcription of ribosomal RNA (rRNA) genes. Binds specifically to the boxA antiterminator sequence of the ribosomal RNA (rrn) operons. The sequence is that of Transcription antitermination protein NusB from Macrococcus caseolyticus (strain JCSC5402) (Macrococcoides caseolyticum).